We begin with the raw amino-acid sequence, 98 residues long: Putative zinc finger protein ORF98b (98 aa).

The segment at 54–77 adopts a C2H2-type zinc-finger fold; the sequence is GFCPYCHNHYRTFGILANHIMRSH.

This chain is Putative zinc finger protein ORF98b, found in Acidianus convivator (ATV).